A 156-amino-acid polypeptide reads, in one-letter code: ATP synthase subunit b (156 aa).

A helical transmembrane segment spans residues 11–31; sequence AIAFFIFVVFCMKYVWPPLMA.

It belongs to the ATPase B chain family. As to quaternary structure, F-type ATPases have 2 components, F(1) - the catalytic core - and F(0) - the membrane proton channel. F(1) has five subunits: alpha(3), beta(3), gamma(1), delta(1), epsilon(1). F(0) has three main subunits: a(1), b(2) and c(10-14). The alpha and beta chains form an alternating ring which encloses part of the gamma chain. F(1) is attached to F(0) by a central stalk formed by the gamma and epsilon chains, while a peripheral stalk is formed by the delta and b chains.

It is found in the cell inner membrane. F(1)F(0) ATP synthase produces ATP from ADP in the presence of a proton or sodium gradient. F-type ATPases consist of two structural domains, F(1) containing the extramembraneous catalytic core and F(0) containing the membrane proton channel, linked together by a central stalk and a peripheral stalk. During catalysis, ATP synthesis in the catalytic domain of F(1) is coupled via a rotary mechanism of the central stalk subunits to proton translocation. In terms of biological role, component of the F(0) channel, it forms part of the peripheral stalk, linking F(1) to F(0). This chain is ATP synthase subunit b, found in Aeromonas hydrophila subsp. hydrophila (strain ATCC 7966 / DSM 30187 / BCRC 13018 / CCUG 14551 / JCM 1027 / KCTC 2358 / NCIMB 9240 / NCTC 8049).